A 263-amino-acid polypeptide reads, in one-letter code: Endonuclease 8 (263 aa).

P2 acts as the Schiff-base intermediate with DNA in catalysis. The active-site Proton donor is E3. K53 functions as the Proton donor; for beta-elimination activity in the catalytic mechanism. Residues Q70, R125, and N169 each contribute to the DNA site. The FPG-type zinc-finger motif lies at 229–263; the sequence is KVFHRDGEPCERCGSIIEKTTLSSRPFYWCPGCQH. R253 acts as the Proton donor; for delta-elimination activity in catalysis.

It belongs to the FPG family. Requires Zn(2+) as cofactor.

The catalysed reaction is 2'-deoxyribonucleotide-(2'-deoxyribose 5'-phosphate)-2'-deoxyribonucleotide-DNA = a 3'-end 2'-deoxyribonucleotide-(2,3-dehydro-2,3-deoxyribose 5'-phosphate)-DNA + a 5'-end 5'-phospho-2'-deoxyribonucleoside-DNA + H(+). Involved in base excision repair of DNA damaged by oxidation or by mutagenic agents. Acts as a DNA glycosylase that recognizes and removes damaged bases. Has a preference for oxidized pyrimidines, such as thymine glycol, 5,6-dihydrouracil and 5,6-dihydrothymine. Has AP (apurinic/apyrimidinic) lyase activity and introduces nicks in the DNA strand. Cleaves the DNA backbone by beta-delta elimination to generate a single-strand break at the site of the removed base with both 3'- and 5'-phosphates. This chain is Endonuclease 8, found in Shigella sonnei (strain Ss046).